We begin with the raw amino-acid sequence, 113 residues long: MKYIAAYALLVLGGNSSPSADDVKKVLKSVGVDSEQDKLDALLKNLEGKQLHELIEAGSSKVSSLSAGAGPSGGAAAAGADAGAAEAEKEEEPQEEEADVNMGDIFGGDDEDY.

A disordered region spans residues 60-113; sequence SKVSSLSAGAGPSGGAAAAGADAGAAEAEKEEEPQEEEADVNMGDIFGGDDEDY. A compositionally biased stretch (low complexity) spans 74 to 85; the sequence is GAAAAGADAGAA. Positions 88–99 are enriched in acidic residues; that stretch reads EKEEEPQEEEAD.

It belongs to the eukaryotic ribosomal protein P1/P2 family. P1 and P2 exist as dimers at the large ribosomal subunit. In terms of processing, phosphorylated.

Functionally, plays an important role in the elongation step of protein synthesis. The polypeptide is Large ribosomal subunit protein P2 (Euplotes raikovi).